Here is a 481-residue protein sequence, read N- to C-terminus: Cobyric acid synthase (481 aa).

Residues 248-435 (ALTVAWLAFS…LHGMFGADGF (188 aa)) enclose the GATase cobBQ-type domain. Cysteine 330 functions as the Nucleophile in the catalytic mechanism. Residue histidine 427 is part of the active site.

Belongs to the CobB/CobQ family. CobQ subfamily.

Its pathway is cofactor biosynthesis; adenosylcobalamin biosynthesis. Functionally, catalyzes amidations at positions B, D, E, and G on adenosylcobyrinic A,C-diamide. NH(2) groups are provided by glutamine, and one molecule of ATP is hydrogenolyzed for each amidation. The chain is Cobyric acid synthase from Cereibacter sphaeroides (strain ATCC 17023 / DSM 158 / JCM 6121 / CCUG 31486 / LMG 2827 / NBRC 12203 / NCIMB 8253 / ATH 2.4.1.) (Rhodobacter sphaeroides).